Consider the following 479-residue polypeptide: Lincomycin resistance protein LmrB (479 aa).

Helical transmembrane passes span Met-19 to Thr-41, Trp-56 to Trp-78, Phe-85 to Phe-107, Arg-112 to Phe-134, Ala-141 to Phe-160, Trp-170 to Met-192, Val-205 to Phe-222, Trp-232 to Phe-251, Met-272 to Leu-294, Leu-304 to Val-326, Trp-338 to Ser-355, Thr-360 to Met-382, Ile-403 to Ala-425, and Ala-449 to Phe-471.

The protein belongs to the major facilitator superfamily. EmrB family.

It localises to the cell membrane. Its function is as follows. Proton-dependent transporter. May mediate the efflux of lincomycin. This chain is Lincomycin resistance protein LmrB (lmrB), found in Bacillus subtilis (strain 168).